We begin with the raw amino-acid sequence, 62 residues long: Potassium channel toxin kappa-KTx 1.4 (62 aa).

An N-terminal signal peptide occupies residues 1 to 26; that stretch reads MKSCLINVSLLILLLLPILGYASVNA. Positions 27 to 38 are excised as a propeptide; sequence ESIDGENDFEEE. Cystine bridges form between Cys-43-Cys-61 and Cys-47-Cys-57.

It belongs to the short scorpion toxin superfamily. Potassium channel inhibitor kappa-KTx family. Kappa-KTx 1 subfamily. As to expression, expressed by the venom gland.

It localises to the secreted. In terms of biological role, shows structural homology with WaTx suggesting that it acts as a cell-penetrating peptide (CPP) with defensive purpose that induces pain by specifically activating mammalian sensory neuron TRPA1 channels. Has no effect on the voltage-gated potassium channels tested. This is Potassium channel toxin kappa-KTx 1.4 from Heterometrus petersii (Asian forest scorpion).